Reading from the N-terminus, the 95-residue chain is Costars family protein At4g33640 (95 aa).

Met1 bears the N-acetylmethionine mark.

The protein belongs to the costars family.

This Arabidopsis thaliana (Mouse-ear cress) protein is Costars family protein At4g33640.